The chain runs to 415 residues: Histone acetyltransferase type B subunit 2 (415 aa).

WD repeat units lie at residues 118-158, 163-203, 211-251, 256-296, and 307-347; these read ENNF…KTAI, PHED…ATDL, THKD…EPVS, PESE…TKSA, and GHSD…EEQA. Positions 349 to 353 are interaction with the histone H4 N-terminus; sequence EDAED. The WD 6 repeat unit spans residues 364-404; sequence GHTGAVTDLSWCPYKDWTIGSVADDNIVHLWEIGKTLLNAE.

The protein belongs to the WD repeat RBAP46/RBAP48/MSI1 family. In terms of assembly, component of the HAT-B complex composed of at least HAT1 and HAT2. The HAT-B complex binds to histone H4 tail.

The protein resides in the cytoplasm. Its subcellular location is the nucleus. Functionally, regulatory subunit of the histone acetylase B (HAT-B) complex. The complex acetylates 'Lys-12' of histone H4 which is required for telomeric silencing. This chain is Histone acetyltransferase type B subunit 2 (HAT2), found in Debaryomyces hansenii (strain ATCC 36239 / CBS 767 / BCRC 21394 / JCM 1990 / NBRC 0083 / IGC 2968) (Yeast).